A 292-amino-acid polypeptide reads, in one-letter code: 11-beta-hydroxysteroid dehydrogenase 1 (292 aa).

Residues Ala2–Tyr7 are Cytoplasmic-facing. Residues Leu8 to Asn24 form a helical; Signal-anchor for type II membrane protein membrane-spanning segment. Topologically, residues Glu25–Asn292 are lumenal. NADP(+) is bound by residues Gly41–Ser67, Thr92–Met93, and Asn119–Ile121. 2 N-linked (GlcNAc...) asparagine glycosylation sites follow: Asn123 and Asn162. Ser170 is a binding site for substrate. Tyr183 functions as the Proton acceptor in the catalytic mechanism. Tyr183–Lys187 is a binding site for NADP(+). N-linked (GlcNAc...) asparagine glycosylation is present at Asn207. Ile218–Thr222 is a binding site for NADP(+).

Belongs to the short-chain dehydrogenases/reductases (SDR) family. As to quaternary structure, homodimer. Post-translationally, glycosylated. As to expression, expressed in the eye.

The protein localises to the endoplasmic reticulum membrane. It localises to the microsome membrane. The enzyme catalyses an 11beta-hydroxysteroid + NADP(+) = an 11-oxosteroid + NADPH + H(+). It carries out the reaction corticosterone + NADP(+) = 11-dehydrocorticosterone + NADPH + H(+). It catalyses the reaction cortisone + NADPH + H(+) = cortisol + NADP(+). The catalysed reaction is a 7beta-hydroxysteroid + NADP(+) = a 7-oxosteroid + NADPH + H(+). The enzyme catalyses 7-oxocholesterol + NADPH + H(+) = 7beta-hydroxycholesterol + NADP(+). It carries out the reaction chenodeoxycholate + NADP(+) = 7-oxolithocholate + NADPH + H(+). It catalyses the reaction 7-oxolithocholate + NADPH + H(+) = ursodeoxycholate + NADP(+). The catalysed reaction is glycochenodeoxycholate + NADP(+) = 7-oxoglycolithocholate + NADPH + H(+). The enzyme catalyses taurochenodeoxycholate + NADP(+) = 7-oxotaurolithocholate + NADPH + H(+). It carries out the reaction tauroursodeoxycholate + NADP(+) = 7-oxotaurolithocholate + NADPH + H(+). It catalyses the reaction glycoursodeoxycholate + NADP(+) = 7-oxoglycolithocholate + NADPH + H(+). The catalysed reaction is 7-oxopregnenolone + NADPH + H(+) = 7beta-hydroxypregnenolone + NADP(+). The enzyme catalyses 3beta,7alpha-dihydroxyandrost-5-en-17-one + NADP(+) = 3beta-hydroxy-5-androstene-7,17-dione + NADPH + H(+). It carries out the reaction 3beta-hydroxy-5-androstene-7,17-dione + NADPH + H(+) = 3beta,7beta-dihydroxyandrost-5-en-17-one + NADP(+). It catalyses the reaction 3beta-hydroxy-5alpha-androstane-7,17-dione + NADPH + H(+) = 3beta,7beta-dihydroxy-5alpha-androstan-17-one + NADP(+). It participates in steroid metabolism. In terms of biological role, controls the reversible conversion of biologically active glucocorticoids such as cortisone to cortisol, and 11-dehydrocorticosterone to corticosterone in the presence of NADP(H). Participates in the corticosteroid receptor-mediated anti-inflammatory response, as well as metabolic and homeostatic processes. Plays a role in the secretion of aqueous humor in the eye, maintaining a normotensive, intraocular environment. Bidirectional in vitro, predominantly functions as a reductase in vivo, thereby increasing the concentration of active glucocorticoids. It has broad substrate specificity, besides glucocorticoids, it accepts other steroid and sterol substrates. It has broad substrate specificity, besides glucocorticoids, it accepts other steroid and sterol substrates. Interconverts 7-oxo- and 7-hydroxy-neurosteroids such as 7-oxopregnenolone and 7beta-hydroxypregnenolone, 7-oxodehydroepiandrosterone (3beta-hydroxy-5-androstene-7,17-dione) and 7beta-hydroxydehydroepiandrosterone (3beta,7beta-dihydroxyandrost-5-en-17-one), among others. Catalyzes the stereo-specific conversion of the major dietary oxysterol, 7-ketocholesterol (7-oxocholesterol), into the more polar 7-beta-hydroxycholesterol metabolite. 7-oxocholesterol is one of the most important oxysterols, it participates in several events such as induction of apoptosis, accumulation in atherosclerotic lesions, lipid peroxidation, and induction of foam cell formation. Mediates the 7-oxo reduction of 7-oxolithocholate mainly to chenodeoxycholate, and to a lesser extent to ursodeoxycholate, both in its free form and when conjugated to glycine or taurine, providing a link between glucocorticoid activation and bile acid metabolism. Catalyzes the synthesis of 7-beta-25-dihydroxycholesterol from 7-oxo-25-hydroxycholesterol in vitro, which acts as a ligand for the G-protein-coupled receptor (GPCR) Epstein-Barr virus-induced gene 2 (EBI2) and may thereby regulate immune cell migration. This is 11-beta-hydroxysteroid dehydrogenase 1 from Oryctolagus cuniculus (Rabbit).